A 202-amino-acid chain; its full sequence is Secreted RxLR effector protein 93 (202 aa).

The signal sequence occupies residues 1-16 (MRFYLTKLFAAAGALA). The interval 29-58 (TPVSPLSRSSDHHQSDDSTQRRLRTLNGAD) is disordered. A compositionally biased stretch (basic and acidic residues) spans 37-48 (SSDHHQSDDSTQ). Residues 49–61 (RRLRTLNGADEER) carry the RxLR-dEER motif.

Belongs to the RxLR effector family.

It is found in the secreted. It localises to the host nucleus. Functionally, secreted effector that completely suppresses the host cell death induced by cell death-inducing proteins. The sequence is that of Secreted RxLR effector protein 93 from Plasmopara viticola (Downy mildew of grapevine).